The primary structure comprises 267 residues: 4-hydroxy-tetrahydrodipicolinate reductase (267 aa).

8–13 (GASGRM) contributes to the NAD(+) binding site. Residue R35 coordinates NADP(+). Residues 98–100 (GTT) and 122–125 (APNM) each bind NAD(+). The active-site Proton donor/acceptor is the H155. H156 contributes to the (S)-2,3,4,5-tetrahydrodipicolinate binding site. K159 functions as the Proton donor in the catalytic mechanism. 165–166 (GT) lines the (S)-2,3,4,5-tetrahydrodipicolinate pocket.

The protein belongs to the DapB family.

It is found in the cytoplasm. The catalysed reaction is (S)-2,3,4,5-tetrahydrodipicolinate + NAD(+) + H2O = (2S,4S)-4-hydroxy-2,3,4,5-tetrahydrodipicolinate + NADH + H(+). The enzyme catalyses (S)-2,3,4,5-tetrahydrodipicolinate + NADP(+) + H2O = (2S,4S)-4-hydroxy-2,3,4,5-tetrahydrodipicolinate + NADPH + H(+). The protein operates within amino-acid biosynthesis; L-lysine biosynthesis via DAP pathway; (S)-tetrahydrodipicolinate from L-aspartate: step 4/4. Catalyzes the conversion of 4-hydroxy-tetrahydrodipicolinate (HTPA) to tetrahydrodipicolinate. The sequence is that of 4-hydroxy-tetrahydrodipicolinate reductase from Hahella chejuensis (strain KCTC 2396).